The following is a 661-amino-acid chain: NUAK family SNF1-like kinase 1 (661 aa).

N-acetylmethionine is present on Met-1. The segment at 1-24 (MEGAAAPVAGDRPDLGLGAPGSPR) is disordered. Ser-22 is subject to Phosphoserine. Residues 55–306 (YELQETLGKG…IEDIANHWWV (252 aa)) form the Protein kinase domain. ATP contacts are provided by residues 61–69 (LGKGTYGKV) and Lys-84. Asp-178 serves as the catalytic Proton acceptor. Thr-211 is subject to Phosphothreonine; by LKB1. Disordered stretches follow at residues 345 to 421 (TEAK…EGVV) and 442 to 570 (LPSS…RPSS). Basic residues predominate over residues 393 to 404 (SSKRPKGILKKR). Positions 399–402 (GILK) match the GILK motif motif. Phosphoserine is present on Ser-455. The span at 518 to 529 (SCRRKGILKHSS) shows a compositional bias: basic residues. Residue Ser-600 is modified to Phosphoserine; by PKB/AKT1.

This sequence belongs to the protein kinase superfamily. CAMK Ser/Thr protein kinase family. SNF1 subfamily. Interacts (via GILK motif) with PPP1CB; the interaction is direct and bridges NUAK1 and PPP1R12A. Interacts with CDKN1A. Mg(2+) serves as cofactor. Post-translationally, ubiquitinated with 'Lys-29'- and 'Lys-33'-linked polyubiquitins which appear to impede LKB1-mediated phosphorylation. Deubiquitinated by USP9X. In terms of processing, phosphorylated at Thr-211 by STK11/LKB1 in complex with STE20-related adapter-alpha (STRADA) pseudo kinase and CAB39. Not dephosphorylated by the myosin PP1 complex when regulating its activity, due to the presence of PPP1R12A, which prevents myosin PP1 from dephosphorylating NUAK1. Phosphorylated by STK38L upon stimulation with IGF1. In terms of tissue distribution, expressed at high levels in heart and brain, and at lower levels in skeletal muscle, kidney, ovary, placenta, lung and liver. Highly up-regulated in colorectal cancer cell lines.

Its subcellular location is the nucleus. The protein localises to the cytoplasm. The catalysed reaction is L-seryl-[protein] + ATP = O-phospho-L-seryl-[protein] + ADP + H(+). The enzyme catalyses L-threonyl-[protein] + ATP = O-phospho-L-threonyl-[protein] + ADP + H(+). Activated by phosphorylation on Thr-211. Activated by phosphorylation at Ser-600 AKT1 during glucose starvation; the relevance of such activation in normal cells is however unsure. Functionally, serine/threonine-protein kinase involved in various processes such as cell adhesion, regulation of cell ploidy and senescence, cell proliferation and tumor progression. Phosphorylates ATM, CASP6, LATS1, PPP1R12A and p53/TP53. Acts as a regulator of cellular senescence and cellular ploidy by mediating phosphorylation of 'Ser-464' of LATS1, thereby controlling its stability. Controls cell adhesion by regulating activity of the myosin protein phosphatase 1 (PP1) complex. Acts by mediating phosphorylation of PPP1R12A subunit of myosin PP1: phosphorylated PPP1R12A then interacts with 14-3-3, leading to reduced dephosphorylation of myosin MLC2 by myosin PP1. May be involved in DNA damage response: phosphorylates p53/TP53 at 'Ser-15' and 'Ser-392' and is recruited to the CDKN1A/WAF1 promoter to participate in transcription activation by p53/TP53. May also act as a tumor malignancy-associated factor by promoting tumor invasion and metastasis under regulation and phosphorylation by AKT1. Suppresses Fas-induced apoptosis by mediating phosphorylation of CASP6, thereby suppressing the activation of the caspase and the subsequent cleavage of CFLAR. Regulates UV radiation-induced DNA damage response mediated by CDKN1A. In association with STK11, phosphorylates CDKN1A in response to UV radiation and contributes to its degradation which is necessary for optimal DNA repair. This is NUAK family SNF1-like kinase 1 (NUAK1) from Homo sapiens (Human).